Here is a 298-residue protein sequence, read N- to C-terminus: MGSYTEPRVAIVAGATSLTRDPLQSGIGIDLAKDLCSKGWKVACVGRRQEAGEALLKDLPQDRAYFFAADVSNYEQYASVFSKVHHLWGRIDALCANAGIVDTSSLYIYGSKNNGVDNIPPAPDLSVVDINYKGVVYGTQLAIHFMRHNPQPGGRIVVTGSIGAVFPHKTYPVYCGTKAAVNHFIRGVAPLLKQKENISINCVMPGIVNTPIVPPEMIAAVTPECITPVQTVLRGYETFLEDSTGMAGEILECSADKLIYYHMPKPGNGHITKRAVTVWEPLFRMSHGEVSGLPDAIP.

NADP(+) contacts are provided by Ile-27, Asp-70, Asn-97, Tyr-174, Lys-178, Val-208, and Thr-210. The active-site Proton acceptor is Tyr-174. Lys-178 acts as the Lowers pKa of active site Tyr in catalysis.

Belongs to the short-chain dehydrogenases/reductases (SDR) family.

The protein operates within sesquiterpene biosynthesis. In terms of biological role, short-chain dehydrogenase/reductase; part of the gene cluster that mediates the biosynthesis of PR-toxin, a bicyclic sesquiterpene belonging to the eremophilane class and acting as a mycotoxin. The first step of the pathway is catalyzed by the aristolochene synthase which performs the cyclization of trans,trans-farnesyl diphosphate (FPP) to the bicyclic sesquiterpene aristolochene. Following the formation of aristolochene, the non-oxygenated aristolochene is converted to the trioxygenated intermediate eremofortin B, via 7-epi-neopetasone. This conversion appears to involve three enzymes, a hydroxysterol oxidase-like enzyme, the quinone-oxidase prx3 that forms the quinone-type-structure in the bicyclic nucleus of aristolochene with the C8-oxo group and the C-3 hydroxyl group, and the P450 monooxygenase prx9 that introduces the epoxide at the double bond between carbons 1 and 2. No monoxy or dioxy-intermediates have been reported to be released to the broth, so these three early oxidative reactions may be coupled together. Eremofortin B is further oxidized by another P450 monooxygenase, that introduces a second epoxide between carbons 7 and 11 prior to acetylation to eremofortin A by the acetyltransferase prx11. The second epoxidation may be performed by a second P450 monooxygenase. After the acetylation step, eremofortin A is converted to eremofortin C and then to PR-toxin. First the conversion of eremofortin A to eremofortin C proceeds by oxidation of the side chain of the molecule at C-12 and is catalyzed by the short-chain oxidoreductase prx1. The cytochrome P450 monooxygenase prx8 also plays a role in this step. The primary alcohol formed at C-12 is finally oxidized by the short-chain alcohol dehydrogenase prx4 that forms PR-toxin. The sequence is that of Short-chain dehydrogenase/reductase prx6 from Penicillium rubens (strain ATCC 28089 / DSM 1075 / NRRL 1951 / Wisconsin 54-1255) (Penicillium chrysogenum).